Consider the following 314-residue polypeptide: Carbamate kinase (314 aa).

The protein belongs to the carbamate kinase family. Homodimer.

Its subcellular location is the cytoplasm. The catalysed reaction is hydrogencarbonate + NH4(+) + ATP = carbamoyl phosphate + ADP + H2O + H(+). It functions in the pathway metabolic intermediate metabolism; carbamoyl phosphate degradation; CO(2) and NH(3) from carbamoyl phosphate: step 1/1. The sequence is that of Carbamate kinase (arcC) from Clostridium perfringens (strain 13 / Type A).